A 329-amino-acid polypeptide reads, in one-letter code: UDP-N-acetylenolpyruvoylglucosamine reductase (329 aa).

The 165-residue stretch at 28-192 folds into the FAD-binding PCMH-type domain; sequence RVGGPADLLC…ARVEVRLHAG (165 aa). R172 is a catalytic residue. A disordered region spans residues 202–227; it reads REDRERRRATQPLDRPTFGSTFTNPP. The Proton donor role is filled by S221. Residue E291 is part of the active site. The interval 307-329 is disordered; that stretch reads DGHAAAGGGPGAASGGVRPPEAT. The segment covering 311–320 has biased composition (gly residues); that stretch reads AAGGGPGAAS.

This sequence belongs to the MurB family. The cofactor is FAD.

The protein localises to the cytoplasm. It carries out the reaction UDP-N-acetyl-alpha-D-muramate + NADP(+) = UDP-N-acetyl-3-O-(1-carboxyvinyl)-alpha-D-glucosamine + NADPH + H(+). It functions in the pathway cell wall biogenesis; peptidoglycan biosynthesis. Cell wall formation. This chain is UDP-N-acetylenolpyruvoylglucosamine reductase, found in Anaeromyxobacter sp. (strain K).